Reading from the N-terminus, the 512-residue chain is Maturase K (512 aa).

The protein belongs to the intron maturase 2 family. MatK subfamily.

It localises to the plastid. The protein resides in the chloroplast. Usually encoded in the trnK tRNA gene intron. Probably assists in splicing its own and other chloroplast group II introns. The protein is Maturase K of Oenothera biennis (German evening primrose).